The sequence spans 335 residues: Fructose-1,6-bisphosphatase class 1 (335 aa).

Glu93, Asp117, Leu119, and Asp120 together coordinate Mg(2+). Substrate contacts are provided by residues 120 to 123 (DGSS), Asn213, Tyr244, and Lys274. Glu280 is a Mg(2+) binding site.

Belongs to the FBPase class 1 family. In terms of assembly, homotetramer. The cofactor is Mg(2+).

The protein localises to the cytoplasm. The catalysed reaction is beta-D-fructose 1,6-bisphosphate + H2O = beta-D-fructose 6-phosphate + phosphate. It participates in carbohydrate biosynthesis; gluconeogenesis. This chain is Fructose-1,6-bisphosphatase class 1, found in Flavobacterium psychrophilum (strain ATCC 49511 / DSM 21280 / CIP 103535 / JIP02/86).